Here is a 736-residue protein sequence, read N- to C-terminus: Myosin-7 (736 aa).

The Myosin motor domain maps to 1 to 342 (NWMVTRINAT…LLGLLEEMRD (342 aa)). Residues 219 to 241 (LNKLMTNLRSTHPHFVRCIIPNE) form an actin-binding region. An IQ domain is found at 345–374 (LSRIITRIQAQSRGVLSRMEYKKLLERRDS). The stretch at 403-736 (LLKSAETEKE…MNKKREAEFQ (334 aa)) forms a coiled coil. Position 701 is a phosphoserine (Ser701). The segment at 716 to 736 (EAGGATSVQIEMNKKREAEFQ) is disordered. The span at 727–736 (MNKKREAEFQ) shows a compositional bias: basic and acidic residues.

The protein belongs to the TRAFAC class myosin-kinesin ATPase superfamily. Myosin family. As to quaternary structure, muscle myosin is a hexameric protein that consists of 2 heavy chain subunits (MHC), 2 alkali light chain subunits (MLC) and 2 regulatory light chain subunits (MLC-2). Interacts with ECPAS. Interacts (via C-terminus) with LRRC39.

It localises to the cytoplasm. The protein localises to the myofibril. It is found in the sarcomere. Myosins are actin-based motor molecules with ATPase activity essential for muscle contraction. Forms regular bipolar thick filaments that, together with actin thin filaments, constitute the fundamental contractile unit of skeletal and cardiac muscle. The chain is Myosin-7 (MYH7) from Oryctolagus cuniculus (Rabbit).